The chain runs to 481 residues: Cysteine protease atg-4.1 (481 aa).

Cys112 (nucleophile) is an active-site residue. Catalysis depends on residues Asp313 and His315. Residues 462–481 (DVHTEEEDADEDNDDDVANA) are disordered.

Belongs to the peptidase C54 family.

The protein localises to the cytoplasm. It carries out the reaction [protein]-C-terminal L-amino acid-glycyl-phosphatidylethanolamide + H2O = [protein]-C-terminal L-amino acid-glycine + a 1,2-diacyl-sn-glycero-3-phosphoethanolamine. In terms of biological role, cysteine protease required for autophagy. Cleaves the C-terminal amino acid of ATG8 family proteins lgg-1, to reveal a C-terminal glycine. Exposure of the glycine at the C-terminus is essential for ATG8 proteins conjugation to phosphatidylethanolamine (PE) and insertion to membranes, which is necessary for autophagy. Its cleavage activity is functionally redundant to atg-4.2, but it cleaves lgg-1 precursors more efficiently than atg-4.2. Acts redundantly with atg-4.2 to promote the lgg-1 delipidation to release the protein from membranes, which facilitates multiple events during macroautophagy. Unlike atg-4.2 does not seem to be required for autophagosome maturation. This Caenorhabditis elegans protein is Cysteine protease atg-4.1.